A 437-amino-acid polypeptide reads, in one-letter code: Elongation factor 1-gamma (437 aa).

A2 is subject to N-acetylalanine. The 86-residue stretch at 2–87 folds into the GST N-terminal domain; the sequence is AAGTLYTYPE…YVSNEELRGS (86 aa). The GST C-terminal domain occupies 88–216; sequence TPEAAAQVVQ…VKLCEKMAQF (129 aa). K147 and K212 each carry N6-acetyllysine. Residues 221 to 254 are compositionally biased toward basic and acidic residues; sequence FAESQPKKDTPRKEKGSREEKQKPQAERKEEKKA. Residues 221-268 form a disordered region; sequence FAESQPKKDTPRKEKGSREEKQKPQAERKEEKKAAAPAPEEEMDECEQ. K253 is covalently cross-linked (Glycyl lysine isopeptide (Lys-Gly) (interchain with G-Cter in SUMO1)). The region spanning 276–437 is the EF-1-gamma C-terminal domain; the sequence is AKDPFAHLPK…KAVNQGKIFK (162 aa). Residue K285 forms a Glycyl lysine isopeptide (Lys-Gly) (interchain with G-Cter in SUMO2) linkage. Position 401 is an N6-acetyllysine (K401). Position 434 is an N6-acetyllysine; alternate (K434). An N6-malonyllysine; alternate modification is found at K434.

As to quaternary structure, EF-1 is composed of four subunits: alpha, beta, delta, and gamma.

In terms of biological role, probably plays a role in anchoring the complex to other cellular components. This chain is Elongation factor 1-gamma (Eef1g), found in Mus musculus (Mouse).